Consider the following 252-residue polypeptide: Type IV pilus assembly protein PilF (252 aa).

A signal peptide spans 1 to 17 (MTVRAALVFLLAVGLTG). A lipid anchor (N-palmitoyl cysteine) is attached at C18. C18 carries S-diacylglycerol cysteine lipidation. TPR repeat units lie at residues 32–67 (GRDE…LEID), 84–101 (EMEP…LASD), 104–133 (NARV…EASQ), 139–171 (ERSR…LRLN), 174–203 (QPSV…LFAQ), and 208–235 (NARS…GLQL).

In terms of assembly, interacts with PilQ; this interaction is essential for assemby of PilQ into secretins.

It is found in the cell outer membrane. In terms of biological role, essential component of the type IV pilus (T4P) that plays a role in surface and host cell adhesion, colonization, biofilm maturation, virulence, and twitching, a form of surface-associated motility facilitated by cycles of extension, adhesion, and retraction of T4P fibers. Plays an essential role in the outer membrane localization and assembly of PilQ into secretins which are dodecamers of PilQ. The chain is Type IV pilus assembly protein PilF (pilF) from Pseudomonas aeruginosa (strain ATCC 15692 / DSM 22644 / CIP 104116 / JCM 14847 / LMG 12228 / 1C / PRS 101 / PAO1).